The chain runs to 204 residues: DNA-binding transcriptional activator EvgA (204 aa).

The Response regulatory domain maps to 2–117 (NAIIIDDHPL…NIIAAIEAAK (116 aa)). Position 52 is a 4-aspartylphosphate (Asp-52). Residues 137–202 (DQQKLDSLSK…DLYTFAQRNK (66 aa)) form the HTH luxR-type domain. The H-T-H motif DNA-binding region spans 161–180 (NNDIAEKMFISNKTVSTYKS).

Homodimer. Phosphorylated by EvgS.

It is found in the cytoplasm. Functionally, member of the two-component regulatory system EvgS/EvgA. Regulates the expression of emrKY operon and yfdX. Also seems to control expression of at least one other multidrug efflux operon. The polypeptide is DNA-binding transcriptional activator EvgA (evgA) (Escherichia coli O157:H7).